Here is a 248-residue protein sequence, read N- to C-terminus: Ferric nitrobindin-like protein (248 aa).

Composition is skewed to polar residues over residues 1–25 and 32–43; these read MSSD…TNSG and QAVNLAAEQSKS. Residues 1 to 49 are disordered; sequence MSSDKANNQSPDQGANTPAESTNSGPKLDGNQAVNLAAEQSKSTADKNL. Residues 82–88 carry the GXWXGXG motif; that stretch reads GVWRGQG. A disordered region spans residues 118–147; sequence SRTWKINPPAEEGAEADGDEASAESAGEPE. Over residues 129 to 139 the composition is skewed to acidic residues; the sequence is EGAEADGDEAS.

It belongs to the nitrobindin family.

This is Ferric nitrobindin-like protein from Corynebacterium urealyticum (strain ATCC 43042 / DSM 7109).